A 258-amino-acid polypeptide reads, in one-letter code: Isoprenyl transferase 2 (258 aa).

Positions 1-18 (MNFPPIHPSTPKMTPPDL) are enriched in pro residues. The disordered stretch occupies residues 1–21 (MNFPPIHPSTPKMTPPDLDPQ). Residue D32 is part of the active site. Residue D32 coordinates Mg(2+). Substrate-binding positions include 33-36 (GNGR), W37, R45, H49, and 77-79 (STE). Residue N80 is the Proton acceptor of the active site. Substrate contacts are provided by residues W81, R83, R200, and 206–208 (RLS). Residue E219 coordinates Mg(2+).

It belongs to the UPP synthase family. Homodimer. Mg(2+) serves as cofactor.

Catalyzes the condensation of isopentenyl diphosphate (IPP) with allylic pyrophosphates generating different type of terpenoids. This is Isoprenyl transferase 2 from Nostoc sp. (strain PCC 7120 / SAG 25.82 / UTEX 2576).